The chain runs to 361 residues: MNLVICVLLLSIWKNNCMTTNQTNGSSTTGDKPVESMQTKLNYLRRNLLILVGIIIMVFVFICFCYLHYNCLSDDASKAGMVKKKGIAAKSSKTSFSEAKTASQCSPETQPMLSTADKSSDSSSPERASAQSSTEKLIRPSSLQKPSIPNSAGKLTRPSYPKRSSKSSCSKKLSKSSHLEKAHKKGSLEKLCKLDYACKLASSDKPVRPPQLFKPLYSSHPQNEISPSKPFGPQELAKPPKHFNPKRSVSLGRAALLSNSELAETCQPYKKKHLVAKTYRPLVNDISEAKEKNTQNLHVSSKVKSSSRSFRKLDSRNNAYGDHVNDSDTMKYYSEVDSDKVIIITCDRGYNQVTSEVTLND.

Positions 1-19 (MNLVICVLLLSIWKNNCMT) are cleaved as a signal peptide. The Extracellular portion of the chain corresponds to 20–47 (TNQTNGSSTTGDKPVESMQTKLNYLRRN). Residue Asn-24 is glycosylated (N-linked (GlcNAc...) asparagine). The chain crosses the membrane as a helical span at residues 48–68 (LLILVGIIIMVFVFICFCYLH). Topologically, residues 69 to 361 (YNCLSDDASK…QVTSEVTLND (293 aa)) are cytoplasmic. Residues 99–113 (AKTASQCSPETQPML) show a composition bias toward polar residues. Disordered stretches follow at residues 99-184 (AKTA…KAHK), 209-247 (PPQL…NPKR), and 295-316 (QNLH…LDSR). Low complexity predominate over residues 114–133 (STADKSSDSSSPERASAQSS). Over residues 141–150 (SSLQKPSIPN) the composition is skewed to polar residues. The span at 299–308 (VSSKVKSSSR) shows a compositional bias: low complexity.

The protein localises to the membrane. This is an uncharacterized protein from Homo sapiens (Human).